The chain runs to 72 residues: MAKEELLEFPGTVSELLPNATFRVKLENDHEIIAHTAGKMRKNRIRVLAGDKVLVEMTPYDLTKGRITYRFK.

Residues 1–72 enclose the S1-like domain; the sequence is MAKEELLEFP…TKGRITYRFK (72 aa).

This sequence belongs to the IF-1 family. In terms of assembly, component of the 30S ribosomal translation pre-initiation complex which assembles on the 30S ribosome in the order IF-2 and IF-3, IF-1 and N-formylmethionyl-tRNA(fMet); mRNA recruitment can occur at any time during PIC assembly.

It is found in the cytoplasm. One of the essential components for the initiation of protein synthesis. Stabilizes the binding of IF-2 and IF-3 on the 30S subunit to which N-formylmethionyl-tRNA(fMet) subsequently binds. Helps modulate mRNA selection, yielding the 30S pre-initiation complex (PIC). Upon addition of the 50S ribosomal subunit IF-1, IF-2 and IF-3 are released leaving the mature 70S translation initiation complex. This is Translation initiation factor IF-1 from Caulobacter vibrioides (strain ATCC 19089 / CIP 103742 / CB 15) (Caulobacter crescentus).